The following is a 368-amino-acid chain: uncharacterized protein (368 aa).

This sequence belongs to the CdaR family.

This is an uncharacterized protein from Bacillus subtilis (strain 168).